Here is a 250-residue protein sequence, read N- to C-terminus: Non-specific acid phosphatase (250 aa).

An N-terminal signal peptide occupies residues 1–20 (MKSRYLVFFLPLIVAKYTSA).

Belongs to the class A bacterial acid phosphatase family. As to quaternary structure, homodimer.

It is found in the periplasm. It carries out the reaction a phosphate monoester + H2O = an alcohol + phosphate. In Salmonella typhimurium (strain LT2 / SGSC1412 / ATCC 700720), this protein is Non-specific acid phosphatase (phoN).